The primary structure comprises 326 residues: Fructose operon regulatory protein (326 aa).

One can recognise an HTH lacI-type domain in the interval 1–58 (MTLDEIAKLAGVSKTTASYVINGKAQKYRISEKTQHKVMAVVEQYNFRPDHAASALRA). The H-T-H motif DNA-binding region spans 3–22 (LDEIAKLAGVSKTTASYVIN).

As to quaternary structure, homodimer.

Interaction with F1P may induce a structural change in the DNA spacer region between the -35 and -10 elements, thereby facilitating RNAP binding to the promoter to trigger the transcriptional activation of the fru operon. Interaction with F1P does not release FruR from its binding sequence. Functionally, regulates the expression of the fruBKA (fru) operon, which encodes proteins involved in the import and metabolism of fructose. In the absence of fructose 1-phosphate (F1P), binds to the promoter region of fruB, interferes with the binding of the RNA polymerase (RNAP) to the promoter and represses the expression of the operon. In the presence of F1P, activates the transcription of the fru operon by facilitating the binding of RNAP to the promoter. Essential for the expression of the fru operon and thus for growth on fructose. This Vibrio cholerae serotype O1 (strain ATCC 39315 / El Tor Inaba N16961) protein is Fructose operon regulatory protein.